The chain runs to 153 residues: Small ribosomal subunit protein uS13 (153 aa).

The interval 129–153 (RGQRTKSTFRHGSSVGVSRTRPTGN) is disordered. A compositionally biased stretch (polar residues) spans 143–153 (VGVSRTRPTGN).

This sequence belongs to the universal ribosomal protein uS13 family. In terms of assembly, part of the 30S ribosomal subunit. Forms a loose heterodimer with protein S19. Forms two bridges to the 50S subunit in the 70S ribosome.

Functionally, located at the top of the head of the 30S subunit, it contacts several helices of the 16S rRNA. In the 70S ribosome it contacts the 23S rRNA (bridge B1a) and protein L5 of the 50S subunit (bridge B1b), connecting the 2 subunits; these bridges are implicated in subunit movement. In Methanosphaera stadtmanae (strain ATCC 43021 / DSM 3091 / JCM 11832 / MCB-3), this protein is Small ribosomal subunit protein uS13.